Here is a 969-residue protein sequence, read N- to C-terminus: Glycine dehydrogenase (decarboxylating) (969 aa).

At Lys716 the chain carries N6-(pyridoxal phosphate)lysine.

This sequence belongs to the GcvP family. In terms of assembly, the glycine cleavage system is composed of four proteins: P, T, L and H. It depends on pyridoxal 5'-phosphate as a cofactor.

The catalysed reaction is N(6)-[(R)-lipoyl]-L-lysyl-[glycine-cleavage complex H protein] + glycine + H(+) = N(6)-[(R)-S(8)-aminomethyldihydrolipoyl]-L-lysyl-[glycine-cleavage complex H protein] + CO2. The glycine cleavage system catalyzes the degradation of glycine. The P protein binds the alpha-amino group of glycine through its pyridoxal phosphate cofactor; CO(2) is released and the remaining methylamine moiety is then transferred to the lipoamide cofactor of the H protein. This is Glycine dehydrogenase (decarboxylating) from Shewanella woodyi (strain ATCC 51908 / MS32).